The following is an 833-amino-acid chain: Enhancer of filamentation 1 (833 aa).

The region spanning 3–65 (ARNLMARALY…PGNRVKLLIG (63 aa)) is the SH3 domain. A phosphotyrosine mark is found at Y91, Y163, Y165, Y176, Y188, Y213, and Y222. A disordered region spans residues 237 to 258 (EKEYDFPPPMKQDGKPDTRPEG). The span at 248–258 (QDGKPDTRPEG) shows a compositional bias: basic and acidic residues. S295 carries the post-translational modification Phosphoserine. 3 disordered regions span residues 297-316 (SLHHAPSQLGQSGDTQSDAY), 326-403 (EVPT…RLRL), and 560-623 (PANS…SERS). Residues 304-314 (QLGQSGDTQSD) are compositionally biased toward polar residues. Y316 carries the post-translational modification Phosphotyrosine. Basic and acidic residues predominate over residues 331 to 343 (TSEKANPEERDGV). An interacts with CTTN region spans residues 350 to 833 (NPADAKGSRD…KRSLLEMATF (484 aa)). The Caspase cleavage related site motif lies at 359-362 (DVVD). Residue S368 is modified to Phosphoserine. Positions 368–396 (SFSSTGSTRSNMSTSSTSSKESSLSASPS) are enriched in low complexity. The span at 564 to 586 (HLKNGPNSIMNSSEYTHPGSQMQ) shows a compositional bias: polar residues. The tract at residues 709-759 (FYYDQCETHFISLLNAIDALFSCVSSAQPPRIFVAHSKFVILSAHKLVFIG) is divergent helix-loop-helix motif. A required for interaction with PLK1 region spans residues 709–833 (FYYDQCETHF…KRSLLEMATF (125 aa)). Phosphoserine is present on S779. T803 carries the post-translational modification Phosphothreonine.

It belongs to the CAS family. Homodimer. Forms heterodimers with BCAR1/p130cas. Forms complexes with PTK2B/RAFTK, adapter protein CRKL and LYN kinase. Part of a complex composed of NEDD9, AURKA and CTTN; within the complex NEDD9 acts as a scaffold protein and is required for complex formation. Part of a ternary complex composed of SMAD3, ITCH/AIP4 and NEDD9/HEF1; within the complex NEDD9/HEF1 interacts (via N-terminus) with ITCH/AIP4 (via WW domains); the complex mediates ubiquitination and proteasomal degradation of NEDD9/HEF1. Interacts with SMAD3; the interaction promotes NEDD9 ubiquitination and proteasomal degradation. Interacts with ID2. Interacts with CTTN (via N-terminus). Interacts with MICAL. Interacts with TXNL4/DIM1. Interacts with BCAR3 (via Ras-GEF domain). Interacts with SH2D3C isoform 1 and isoform 2. Interacts with ECT2. Interacts with PTPN11/SHP-2 (via SH2 domains); the interaction is enhanced when NEDD9/CAS-L is tyrosine phosphorylated. Interacts (via C-terminus) with PLK1 (via polo box domains). Interacts with NKX2-5. Interacts with SMAD3; the interaction is inhibited by oxidation of NEDD9. Interacts with NEDD9/HEF1; interaction is induced by CXCL12 promotion of ABL-mediated phosphorylation of NEDD9/HEF1. Interacts (via SH3 domain) with PTK2/FAK. Interacts with FYN; in the presence of PTK2. Interacts with INPPL1/SHIP2. In terms of processing, polyubiquitinated by ITCH/AIP4, leading to proteasomal degradation. PTK2/FAK1 phosphorylates the protein at the YDYVHL motif (conserved among all cas proteins) following integrin stimulation. The SRC family kinases (FYN, SRC, LCK and CRK) are recruited to the phosphorylated sites and can phosphorylate other tyrosine residues. Ligation of either integrin beta-1 or B-cell antigen receptor on tonsillar B-cells and B-cell lines promotes tyrosine phosphorylation and both integrin and BCR-mediated tyrosine phosphorylation requires an intact actin network. Phosphorylation is required to recruit NEDD9 to T-cell receptor microclusters at the periphery of newly formed immunological synapses. In fibroblasts transformation with oncogene v-ABL results in an increase in tyrosine phosphorylation. Transiently phosphorylated following CD3 cross-linking and this phosphorylated form binds to CRKL and C3G. A mutant lacking the SH3 domain is phosphorylated upon CD3 cross-linking but not upon integrin beta-1 cross-linking. Tyrosine phosphorylation occurs upon stimulation of the G-protein coupled C1a calcitonin receptor. Calcitonin-stimulated tyrosine phosphorylation is mediated by calcium- and protein kinase C-dependent mechanisms and requires the integrity of the actin cytoskeleton. Phosphorylation at Ser-368 induces proteasomal degradation. Phosphorylated by LYN. Phosphorylation at Ser-779 by CSNK1D or CSNK1E, or phosphorylation of Thr-803 by CSNK1E enhances the interaction of NEDD9 with PLK1. Expressed in splenic lymphocytes (at protein level). Expressed in T-cells (at protein level). Expressed in the thymus. Expressed throughout the brain however particularly abundant in the cortex and hippocampus.

It localises to the cytoplasm. Its subcellular location is the cell cortex. The protein resides in the nucleus. It is found in the golgi apparatus. The protein localises to the cell projection. It localises to the lamellipodium. Its subcellular location is the cell junction. The protein resides in the focal adhesion. It is found in the cytoskeleton. The protein localises to the spindle pole. It localises to the cilium. Its subcellular location is the cilium basal body. The protein resides in the basolateral cell membrane. Functionally, scaffolding protein which plays a central coordinating role for tyrosine-kinase-based signaling related to cell adhesion. As a focal adhesion protein, plays a role in embryonic fibroblast migration. May play an important role in integrin beta-1 or B cell antigen receptor (BCR) mediated signaling in B- and T-cells. Integrin beta-1 stimulation leads to recruitment of various proteins including CRKl and SHPTP2 to the tyrosine phosphorylated form. Promotes adhesion and migration of lymphocytes; as a result required for the correct migration of lymphocytes to the spleen and other secondary lymphoid organs. Plays a role in the organization of T-cell F-actin cortical cytoskeleton and the centralization of T-cell receptor microclusters at the immunological synapse. Negatively regulates cilia outgrowth in polarized cysts. Modulates cilia disassembly via activation of AURKA-mediated phosphorylation of HDAC6 and subsequent deacetylation of alpha-tubulin. Positively regulates RANKL-induced osteoclastogenesis. Required for the maintenance of hippocampal dendritic spines in the dentate gyrus and CA1 regions, thereby involved in spatial learning and memory. In Mus musculus (Mouse), this protein is Enhancer of filamentation 1.